The primary structure comprises 534 residues: CTP synthase (534 aa).

Residues 1-266 form an amidoligase domain region; sequence MKQKFIFVTG…DELIVARLGL (266 aa). CTP is bound at residue S14. S14 provides a ligand contact to UTP. ATP contacts are provided by residues 15–20 and D72; that span reads SIGKGL. Residues D72 and E140 each coordinate Mg(2+). CTP is bound by residues 147–149, 187–192, and K223; these read DIE and KSKPTQ. UTP-binding positions include 187–192 and K223; that span reads KSKPTQ. A Glutamine amidotransferase type-1 domain is found at 291–534; sequence KIGVVGKYVD…HFVKASLKKK (244 aa). L-glutamine is bound at residue G353. The active-site Nucleophile; for glutamine hydrolysis is C380. L-glutamine-binding positions include 381–384, E404, and R464; that span reads FGMQ. Residues H509 and E511 contribute to the active site.

It belongs to the CTP synthase family. Homotetramer.

It carries out the reaction UTP + L-glutamine + ATP + H2O = CTP + L-glutamate + ADP + phosphate + 2 H(+). The enzyme catalyses L-glutamine + H2O = L-glutamate + NH4(+). The catalysed reaction is UTP + NH4(+) + ATP = CTP + ADP + phosphate + 2 H(+). It participates in pyrimidine metabolism; CTP biosynthesis via de novo pathway; CTP from UDP: step 2/2. Its activity is regulated as follows. Allosterically activated by GTP, when glutamine is the substrate; GTP has no effect on the reaction when ammonia is the substrate. The allosteric effector GTP functions by stabilizing the protein conformation that binds the tetrahedral intermediate(s) formed during glutamine hydrolysis. Inhibited by the product CTP, via allosteric rather than competitive inhibition. Functionally, catalyzes the ATP-dependent amination of UTP to CTP with either L-glutamine or ammonia as the source of nitrogen. Regulates intracellular CTP levels through interactions with the four ribonucleotide triphosphates. This is CTP synthase from Bdellovibrio bacteriovorus (strain ATCC 15356 / DSM 50701 / NCIMB 9529 / HD100).